A 732-amino-acid chain; its full sequence is Polyribonucleotide nucleotidyltransferase (732 aa).

Asp502 and Asp508 together coordinate Mg(2+). The KH domain maps to 569 to 628; that stretch reads PRLTSIQIPVDAIGMVIGKGGETIRSITEETGAEINIDDDGTVTIACSSPEGTKAAVETI. One can recognise an S1 motif domain in the interval 638 to 712; the sequence is GTIYMGKVRD…GKTKFALSIK (75 aa).

Belongs to the polyribonucleotide nucleotidyltransferase family. It depends on Mg(2+) as a cofactor.

The protein resides in the cytoplasm. It carries out the reaction RNA(n+1) + phosphate = RNA(n) + a ribonucleoside 5'-diphosphate. Involved in mRNA degradation. Catalyzes the phosphorolysis of single-stranded polyribonucleotides processively in the 3'- to 5'-direction. The polypeptide is Polyribonucleotide nucleotidyltransferase (Chlorobaculum parvum (strain DSM 263 / NCIMB 8327) (Chlorobium vibrioforme subsp. thiosulfatophilum)).